A 550-amino-acid polypeptide reads, in one-letter code: Aspartate--tRNA ligase (550 aa).

An L-aspartate-binding site is contributed by E162. Residues 186 to 189 (QIYK) are aspartate. L-aspartate is bound at residue R208. ATP-binding positions include 208–210 (RDE) and Q217. H417 is a binding site for L-aspartate. E451 lines the ATP pocket. R458 is an L-aspartate binding site. An ATP-binding site is contributed by 499 to 502 (GIDR).

Belongs to the class-II aminoacyl-tRNA synthetase family. Type 1 subfamily. Homodimer.

Its subcellular location is the cytoplasm. The enzyme catalyses tRNA(Asp) + L-aspartate + ATP = L-aspartyl-tRNA(Asp) + AMP + diphosphate. Functionally, catalyzes the attachment of L-aspartate to tRNA(Asp) in a two-step reaction: L-aspartate is first activated by ATP to form Asp-AMP and then transferred to the acceptor end of tRNA(Asp). The polypeptide is Aspartate--tRNA ligase (Mycoplasma genitalium (strain ATCC 33530 / DSM 19775 / NCTC 10195 / G37) (Mycoplasmoides genitalium)).